Here is a 249-residue protein sequence, read N- to C-terminus: uncharacterized protein (249 aa).

It belongs to the chlamydial CPn_0206/CT203/TC_0475 family.

This is an uncharacterized protein from Chlamydia muridarum (strain MoPn / Nigg).